Here is an 876-residue protein sequence, read N- to C-terminus: Leucine--tRNA ligase (876 aa).

A 'HIGH' region motif is present at residues Pro-43 to His-53. The short motif at Lys-630 to Ser-634 is the 'KMSKS' region element. Lys-633 contacts ATP.

The protein belongs to the class-I aminoacyl-tRNA synthetase family.

Its subcellular location is the cytoplasm. The enzyme catalyses tRNA(Leu) + L-leucine + ATP = L-leucyl-tRNA(Leu) + AMP + diphosphate. In Methylocella silvestris (strain DSM 15510 / CIP 108128 / LMG 27833 / NCIMB 13906 / BL2), this protein is Leucine--tRNA ligase.